The primary structure comprises 687 residues: Ribonuclease E (687 aa).

An S1 motif domain is found at 35 to 117; sequence GDIYLGVVEN…LTGNITLPGR (83 aa). Mg(2+) contacts are provided by D296 and D339. Residues C397 and C400 each contribute to the Zn(2+) site. Residues 650–687 are disordered; it reads PIKLTETMEESEVNAASTANRRRRRRSSASDSDTGEDS. The C4 Arg-rich motif, necessary and sufficient to confer PNPase binding on another protein motif lies at 670-678; the sequence is RRRRRRSSA.

This sequence belongs to the RNase E/G family. In terms of assembly, may form homodimers or higher order multimers. Interacts with polynucleotide phosphorylase (PNPase, pnp) via the C4 Arg-rich motif (residues 670-678). A homotetramer formed by a dimer of dimers. Mg(2+) is required as a cofactor. Zn(2+) serves as cofactor.

Its subcellular location is the cytoplasm. The catalysed reaction is Endonucleolytic cleavage of single-stranded RNA in A- and U-rich regions.. Functionally, endoribonuclease that plays a central role in rRNA and tRNA processing and mRNA decay. Has been shown to act on 9S rRNA (the precursor of 5S rRNA). This is Ribonuclease E from Nostoc sp. (strain PCC 7120 / SAG 25.82 / UTEX 2576).